A 243-amino-acid chain; its full sequence is Phosphate-specific transport system accessory protein PhoU (243 aa).

Belongs to the PhoU family. In terms of assembly, homodimer. Interacts with phosphate regulon transcriptional regulatory protein PhoB and ferric uptake regulation protein Fur.

Its subcellular location is the cytoplasm. Part of the phosphate (Pho) regulon, which plays a key role in phosphate homeostasis. Encoded together with proteins of the phosphate-specific transport (Pst) system in the polycistronic pstSCAB-phoU operon. PhoU is essential for the repression of the Pho regulon at high phosphate conditions. In this role, it may bind, possibly as a chaperone, to PhoR, PhoB or a PhoR-PhoB complex to promote dephosphorylation of phospho-PhoB, or inhibit formation of the PhoR-PhoB transitory complex. The chain is Phosphate-specific transport system accessory protein PhoU from Edwardsiella tarda.